A 153-amino-acid polypeptide reads, in one-letter code: UPF0756 membrane protein lwe1581 (153 aa).

The next 4 membrane-spanning stretches (helical) occupy residues 6–26 (MLFL…SLII), 54–74 (WGVT…QIGF), 80–100 (SFKS…SILA), and 117–137 (LVFG…GPVI).

The protein belongs to the UPF0756 family.

Its subcellular location is the cell membrane. The sequence is that of UPF0756 membrane protein lwe1581 from Listeria welshimeri serovar 6b (strain ATCC 35897 / DSM 20650 / CCUG 15529 / CIP 8149 / NCTC 11857 / SLCC 5334 / V8).